A 347-amino-acid chain; its full sequence is Geranylgeranyl pyrophosphate synthase 7, chloroplastic (347 aa).

Residues 1-39 (MTTLNLSIFPSVKISSSASIPGFIKIQPFLLRRKLSTVL) constitute a chloroplast transit peptide. Positions 95, 98, and 127 each coordinate isopentenyl diphosphate. D134 and D140 together coordinate Mg(2+). Dimethylallyl diphosphate is bound at residue R145. R146 contributes to the isopentenyl diphosphate binding site. Dimethylallyl diphosphate is bound by residues K232, T233, Q270, K287, and K297.

This sequence belongs to the FPP/GGPP synthase family. In terms of assembly, monomer. The cofactor is Mg(2+).

The protein resides in the plastid. It is found in the chloroplast. The enzyme catalyses isopentenyl diphosphate + dimethylallyl diphosphate = (2E)-geranyl diphosphate + diphosphate. It carries out the reaction isopentenyl diphosphate + (2E)-geranyl diphosphate = (2E,6E)-farnesyl diphosphate + diphosphate. It catalyses the reaction isopentenyl diphosphate + (2E,6E)-farnesyl diphosphate = (2E,6E,10E)-geranylgeranyl diphosphate + diphosphate. It functions in the pathway isoprenoid biosynthesis; farnesyl diphosphate biosynthesis; farnesyl diphosphate from geranyl diphosphate and isopentenyl diphosphate: step 1/1. The protein operates within isoprenoid biosynthesis; geranyl diphosphate biosynthesis; geranyl diphosphate from dimethylallyl diphosphate and isopentenyl diphosphate: step 1/1. It participates in isoprenoid biosynthesis; geranylgeranyl diphosphate biosynthesis; geranylgeranyl diphosphate from farnesyl diphosphate and isopentenyl diphosphate: step 1/1. Catalyzes the trans-addition of the three molecules of IPP onto DMAPP to form geranylgeranyl pyrophosphate. This is Geranylgeranyl pyrophosphate synthase 7, chloroplastic from Arabidopsis thaliana (Mouse-ear cress).